The following is a 404-amino-acid chain: MKLPIYLDYAATTPVDPRVAEKMMQCLTMDGIFGNPASRSHRYGWQAEEAVDIARNQVADLINADPREIVFTSGATESDNLAIKGVAHFYHKKGKHIITSKTEHKAVLDTCRQLEREGYEVTYLQPEPSGLIPVAMIEAAMREDTILVSIMQVNNEIGVIQDIDAIGELCRSRKIIFHVDAAQSAGKLPIDVQTTKVDLMSISGHKMYGPKGIGALYVSRKPRIRLEAAMHGGGHERGMRSGTLATHQIVGMGEAAAIAKADMVVDNERIARLRDKLWNGIKHIEETYINGDVEKRACGSLNVSFNFVEGESLMMALKDLAVSSGSACTSASLEPSYVLRALGLNDEMAHSSIRFSIGRFTTDEEIDHAIETIKESIGNLREMSPLWEMFKDGIDLDSVQWAHH.

Pyridoxal 5'-phosphate contacts are provided by residues 75-76 (AT), N155, Q183, and 203-205 (SGH). K206 carries the post-translational modification N6-(pyridoxal phosphate)lysine. T243 contacts pyridoxal 5'-phosphate. The active-site Cysteine persulfide intermediate is C328. Residue C328 coordinates [2Fe-2S] cluster.

Belongs to the class-V pyridoxal-phosphate-dependent aminotransferase family. NifS/IscS subfamily. In terms of assembly, homodimer. Forms a heterotetramer with IscU, interacts with other sulfur acceptors. Pyridoxal 5'-phosphate is required as a cofactor.

The protein resides in the cytoplasm. The catalysed reaction is (sulfur carrier)-H + L-cysteine = (sulfur carrier)-SH + L-alanine. Its pathway is cofactor biosynthesis; iron-sulfur cluster biosynthesis. Functionally, master enzyme that delivers sulfur to a number of partners involved in Fe-S cluster assembly, tRNA modification or cofactor biosynthesis. Catalyzes the removal of elemental sulfur atoms from cysteine to produce alanine. Functions as a sulfur delivery protein for Fe-S cluster synthesis onto IscU, an Fe-S scaffold assembly protein, as well as other S acceptor proteins. The chain is Cysteine desulfurase IscS from Shewanella halifaxensis (strain HAW-EB4).